The chain runs to 435 residues: Solute carrier family 38 member 8 (435 aa).

The next 11 membrane-spanning stretches (helical) occupy residues 29 to 49 (AVFI…PWAF), 55 to 75 (VVPA…GLVI), 100 to 120 (IGKL…VAFL), 151 to 171 (FTLP…REIA), 178 to 198 (ILGT…YYLW), 218 to 240 (VFSV…SIYC), 250 to 270 (WALV…LTGV), 295 to 315 (IIVA…IVLF), 348 to 368 (MPLT…MPDL), 374 to 394 (IIGG…LICA), and 410 to 430 (VWGV…TAAA).

The protein belongs to the amino acid/polyamine transporter 2 family. Expressed in fetal and adult brain, and spinal cord. In the brain, it is localized in the cell body and axon of the majority of neuronal cells and in a subset of glial cells. Found throughout the neuronal retina, with higher expression levels in the inner and outer plexiform layers and the photoreceptor layer. Very weak expression is also present in the kidneys, thymus, and testes.

The protein localises to the membrane. The protein resides in the cytoplasm. It is found in the cell cortex. Its subcellular location is the cell projection. It localises to the axon. It catalyses the reaction L-glutamine(out) = L-glutamine(in). The catalysed reaction is L-alanine(in) = L-alanine(out). The enzyme catalyses L-histidine(out) = L-histidine(in). It carries out the reaction L-aspartate(out) = L-aspartate(in). It catalyses the reaction L-arginine(in) = L-arginine(out). The catalysed reaction is L-leucine(in) = L-leucine(out). Electrogenic sodium-dependent amino acid transporter with a preference for L-glutamine, L-alanine, L-histidine, L-aspartate and L-arginine. May facilitate glutamine uptake in both excitatory and inhibitory neurons. The transport mechanism and stoichiometry remain to be elucidated. The protein is Solute carrier family 38 member 8 of Homo sapiens (Human).